Here is a 216-residue protein sequence, read N- to C-terminus: Large ribosomal subunit protein bL25 (216 aa).

The interval 184–216 (VPPTSDVEEEEGDEDLEEDVEETAAEEEEGVEE) is disordered. Over residues 189-216 (DVEEEEGDEDLEEDVEETAAEEEEGVEE) the composition is skewed to acidic residues.

Belongs to the bacterial ribosomal protein bL25 family. CTC subfamily. As to quaternary structure, part of the 50S ribosomal subunit; part of the 5S rRNA/L5/L18/L25 subcomplex. Contacts the 5S rRNA. Binds to the 5S rRNA independently of L5 and L18.

Functionally, this is one of the proteins that binds to the 5S RNA in the ribosome where it forms part of the central protuberance. The chain is Large ribosomal subunit protein bL25 from Desulforapulum autotrophicum (strain ATCC 43914 / DSM 3382 / VKM B-1955 / HRM2) (Desulfobacterium autotrophicum).